A 433-amino-acid polypeptide reads, in one-letter code: MPDYLGADQRKTKEDEKDDKPIRALDEGDIALLKTYGQSTYSRQIKQVEDDIQQLLKKINELTGIKESDTGLAPPALWDLAADKQTLQSEQPLQVARCTKIITADSEDPKYIINVKQFAKFVVDLSDQVAPTDIEEGMRVGVDRNKYQIHIPLPPKIDPTVTMMQVEEKPDVTYSDVGGCKEQIEKLREVVETPLLHPERFVNLGIEPPKGVLLFGPPGTGKTLCARAVANRTDACFIRVIGSELVQKYVGEGARMVRELFEMARTKKACLIFFDEIDAIGGARFDDGAGGDNEVQRTMLELINQLDGFDPRGNIKVLMATNRPDTLDPALMRPGRLDRKIEFSLPDLEGRTHILKIHARSMSVERDIRFELLARLCPNSTGAEIRSVCTEAGMFAIRARRKIATEKDFLEAVNKVIKSYAKFSATPRYMTYN.

Positions 1–22 (MPDYLGADQRKTKEDEKDDKPI) are disordered. Positions 8 to 22 (DQRKTKEDEKDDKPI) are enriched in basic and acidic residues. Position 116 is an N6-acetyllysine (Lys-116). 216-223 (GPPGTGKT) lines the ATP pocket. Lys-422 is modified (N6-acetyllysine).

This sequence belongs to the AAA ATPase family. Component of the 19S proteasome regulatory particle complex. The 26S proteasome consists of a 20S core particle (CP) and two 19S regulatory subunits (RP). The regulatory particle is made of a lid composed of 9 subunits, a base containing 6 ATPases including PSMC2 and few additional components. Interacts with NDC80/HEC; this interaction is detected only during M phase. Interacts and SQSTM1. Interacts with PAAF1. Directly interacts with TRIM5. Monoubiquitinated by RNF181. Post-translationally, phosphorylated. Dephosphorylated by UBLCP1 which impairs PSMC2 ATPase activity and disrupts 26S proteasome assembly.

It localises to the cytoplasm. It is found in the nucleus. Component of the 26S proteasome, a multiprotein complex involved in the ATP-dependent degradation of ubiquitinated proteins. This complex plays a key role in the maintenance of protein homeostasis by removing misfolded or damaged proteins, which could impair cellular functions, and by removing proteins whose functions are no longer required. Therefore, the proteasome participates in numerous cellular processes, including cell cycle progression, apoptosis, or DNA damage repair. PSMC2 belongs to the heterohexameric ring of AAA (ATPases associated with diverse cellular activities) proteins that unfolds ubiquitinated target proteins that are concurrently translocated into a proteolytic chamber and degraded into peptides. This chain is 26S proteasome regulatory subunit 7 (PSMC2), found in Pongo abelii (Sumatran orangutan).